Consider the following 74-residue polypeptide: Conotoxin AbVIA (74 aa).

Residues 1–17 (VLIIAVLFLTACQLTTA) form the signal peptide. Positions 18 to 38 (VTSSRGEQKHRALRSTDKKFK) are excised as a propeptide. 3 disulfide bridges follow: Cys-43–Cys-57, Cys-50–Cys-61, and Cys-56–Cys-68. Position 73 is a serine amide (Ser-73).

Belongs to the conotoxin O1 superfamily. As to expression, expressed by the venom duct.

Its subcellular location is the secreted. The protein is Conotoxin AbVIA of Conus abbreviatus (Abbreviated cone).